Reading from the N-terminus, the 485-residue chain is Aspartyl/glutamyl-tRNA(Asn/Gln) amidotransferase subunit B (485 aa).

It belongs to the GatB/GatE family. GatB subfamily. Heterotrimer of A, B and C subunits.

The enzyme catalyses L-glutamyl-tRNA(Gln) + L-glutamine + ATP + H2O = L-glutaminyl-tRNA(Gln) + L-glutamate + ADP + phosphate + H(+). It carries out the reaction L-aspartyl-tRNA(Asn) + L-glutamine + ATP + H2O = L-asparaginyl-tRNA(Asn) + L-glutamate + ADP + phosphate + 2 H(+). Allows the formation of correctly charged Asn-tRNA(Asn) or Gln-tRNA(Gln) through the transamidation of misacylated Asp-tRNA(Asn) or Glu-tRNA(Gln) in organisms which lack either or both of asparaginyl-tRNA or glutaminyl-tRNA synthetases. The reaction takes place in the presence of glutamine and ATP through an activated phospho-Asp-tRNA(Asn) or phospho-Glu-tRNA(Gln). The chain is Aspartyl/glutamyl-tRNA(Asn/Gln) amidotransferase subunit B from Borrelia duttonii (strain Ly).